The following is a 247-amino-acid chain: UPF0659 protein C216.03 (247 aa).

This sequence belongs to the UPF0659 family.

Its subcellular location is the cytoplasm. It localises to the nucleus. In Schizosaccharomyces pombe (strain 972 / ATCC 24843) (Fission yeast), this protein is UPF0659 protein C216.03.